The primary structure comprises 571 residues: RNA polymerase sigma factor SigA (571 aa).

The tract at residues 321–391 (MVESNLRLVI…TRAIADQART (71 aa)) is sigma-70 factor domain-2. Residues 345-348 (DLIQ) carry the Interaction with polymerase core subunit RpoC motif. The segment at 400–476 (ETINKVLRGA…DTAVESPAEA (77 aa)) is sigma-70 factor domain-3. The tract at residues 489 to 542 (VLKTLTDRERFVLIHRFGLLDGRPKTLEEVGSAFNVTRERIRQIEAKALRKMRH) is sigma-70 factor domain-4. The H-T-H motif DNA-binding region spans 515-534 (LEEVGSAFNVTRERIRQIEA).

Belongs to the sigma-70 factor family. RpoD/SigA subfamily. In terms of assembly, interacts transiently with the RNA polymerase catalytic core.

The protein resides in the cytoplasm. In terms of biological role, sigma factors are initiation factors that promote the attachment of RNA polymerase to specific initiation sites and are then released. This sigma factor is the primary sigma factor during exponential growth. In Chlamydia trachomatis serovar D (strain ATCC VR-885 / DSM 19411 / UW-3/Cx), this protein is RNA polymerase sigma factor SigA.